Here is a 354-residue protein sequence, read N- to C-terminus: Dye-decolorizing peroxidase (354 aa).

The active-site Proton acceptor is the D165. Residue H238 participates in heme binding. The segment at 312–335 (GLFFSPTVDFLDDPPPLPAPGTPA) is targeting peptide. Pro residues predominate over residues 324–337 (DPPPLPAPGTPAAP). Positions 324–354 (DPPPLPAPGTPAAPPARNGSLSIGSLKGTTR) are disordered. A compositionally biased stretch (polar residues) spans 342 to 354 (GSLSIGSLKGTTR).

This sequence belongs to the DyP-type peroxidase family. As to quaternary structure, found in a complex with type 1 encapsulin, strongly suggesting it is found in a type 1 encapsulin nanocompartment. Homotetramer, presumably also in the type 1 encapsulin nanocompartment. Requires heme b as cofactor.

The protein resides in the encapsulin nanocompartment. It is found in the cell membrane. It carries out the reaction 2 a phenolic donor + H2O2 = 2 a phenolic radical donor + 2 H2O. Its function is as follows. Cargo protein of a type 1 encapsulin nanocompartment. A heme-dependent peroxidase. This cargo-loaded encapsulin nanocompartment is probably involved in protection against oxidative damage. The protein is Dye-decolorizing peroxidase of Mycolicibacterium paratuberculosis (strain ATCC BAA-968 / K-10) (Mycobacterium paratuberculosis).